Reading from the N-terminus, the 578-residue chain is Glycosyltransferase family 92 protein RCOM_0530710 (578 aa).

A helical membrane pass occupies residues 21 to 43 (SFFSVRSLTACLSFFVFLLFISS). A GT92 domain is found at 295–531 (YELCACTMLW…QNQGSKDRAP (237 aa)).

Belongs to the glycosyltransferase 92 family.

It is found in the membrane. The sequence is that of Glycosyltransferase family 92 protein RCOM_0530710 from Ricinus communis (Castor bean).